A 104-amino-acid polypeptide reads, in one-letter code: MAAKIRRDDEVIVLTGKDKGKRGKVKNVLSSGKVIVEGINLVKKHQKPVPALNQPGGIVEKEAAIQISNLAIFNAATGKADRVGFRFEDGKKVRFFKSNSETIK.

The protein belongs to the universal ribosomal protein uL24 family. Part of the 50S ribosomal subunit.

One of two assembly initiator proteins, it binds directly to the 5'-end of the 23S rRNA, where it nucleates assembly of the 50S subunit. Functionally, one of the proteins that surrounds the polypeptide exit tunnel on the outside of the subunit. In Klebsiella pneumoniae (strain 342), this protein is Large ribosomal subunit protein uL24.